The chain runs to 625 residues: MNMIKKNKKKSFLCTIFSTINVLHGLIAISPIYIIKESFVNNLGFKIDKLAIFGILSIIFWTLFFIIFLKYLILIVSINNSGEGGILTLMSITAKKINSKSTFVIVILGLISMCLFFGDIIIIPSISIISVIEEISIYYLSFEKFIFIISIAIFTFLFFIQKKIKNEFNNIFSFLISIWFILVGLIGLKGIYINPEILLAINPKYLINFFKHYKLNAFFVFGTLILLISISEILYINIGRFSKLEIRKSWLFFVFPMIMINCFGQGSIILLYPESISHPFFFLVPDWARFFTFTFAIIISIISSQNIISSIFYLTRQAVRLGYLPNIKIFYTSEVKSRRIYIPCINWIFYLSAVIQISIFKNLHNLILIYGIGSIITMSLTTFFSLLFFKKKFEKFKILKITFLLTILILEFFIFISNSYKIICGGWFPIVFGIIFFTIMITWKVETFNLLLHTHNNSNSIKLFIKNLRKNNLLKVNGTSVFMSSMDNTIPLSIIHNIKHNKVLHEKIIFLNIKTEDSPFIKKECRVEIEKLNNGFWGVKAYYGFKETPDIKEIFHFCNLLGISLNIMETSFFISHESLILGKRPWYLAIRAKLFIFLKRNSLGSTYQYSIPLDRVIALGIQVKI.

The next 12 helical transmembrane spans lie at 15 to 35 (TIFS…IYII), 58 to 78 (IIFW…IVSI), 103 to 123 (FVIV…IIII), 140 to 160 (LSFE…LFFI), 171 to 191 (IFSF…LKGI), 218 to 238 (FFVF…YINI), 251 to 271 (LFFV…IILL), 282 to 302 (FLVP…ISII), 340 to 360 (IYIP…ISIF), 366 to 386 (LILI…FFSL), 396 to 416 (FKIL…FIFI), and 422 to 442 (IICG…IMIT).

Belongs to the HAK/KUP transporter (TC 2.A.72) family.

Its subcellular location is the cell membrane. The enzyme catalyses K(+)(in) + H(+)(in) = K(+)(out) + H(+)(out). Its function is as follows. Responsible for the low-affinity transport of potassium into the cell. Likely operates as a K(+):H(+) symporter. The chain is Low affinity potassium transport system protein Kup from Wigglesworthia glossinidia brevipalpis.